The following is a 527-amino-acid chain: Peptide chain release factor 3 (527 aa).

The tr-type G domain occupies 11-278 (AKRRTFAIIS…GFVEWAPPPL (268 aa)). Residues 20–27 (SHPDAGKT), 87–91 (DTPGH), and 141–144 (NKMD) contribute to the GTP site.

The protein belongs to the TRAFAC class translation factor GTPase superfamily. Classic translation factor GTPase family. PrfC subfamily.

Its subcellular location is the cytoplasm. Functionally, increases the formation of ribosomal termination complexes and stimulates activities of RF-1 and RF-2. It binds guanine nucleotides and has strong preference for UGA stop codons. It may interact directly with the ribosome. The stimulation of RF-1 and RF-2 is significantly reduced by GTP and GDP, but not by GMP. This chain is Peptide chain release factor 3, found in Saccharophagus degradans (strain 2-40 / ATCC 43961 / DSM 17024).